The following is a 238-amino-acid chain: Fatty acid metabolism regulator protein (238 aa).

Residues 6–74 (QSPAGFAEEY…HGKPTKVNNF (69 aa)) enclose the HTH gntR-type domain. Residues 34–53 (ERELSELIGVTRTTLREVLQ) constitute a DNA-binding region (H-T-H motif).

As to quaternary structure, homodimer.

The protein localises to the cytoplasm. In terms of biological role, multifunctional regulator of fatty acid metabolism. The sequence is that of Fatty acid metabolism regulator protein from Erwinia tasmaniensis (strain DSM 17950 / CFBP 7177 / CIP 109463 / NCPPB 4357 / Et1/99).